The chain runs to 673 residues: Synaptotagmin-like protein 4 (673 aa).

The region spanning 4–122 is the RabBD domain; the sequence is ILDLSFLSEM…KATGDWFYDQ (119 aa). The FYVE-type zinc-finger motif lies at 63 to 105; the sequence is CARCQEGLGRLIPKSSTCVGCNHLVCRECRVLESNGSWRCKVC. Positions 184 to 253 are disordered; it reads FEVPKTRSGK…PGNQNAVCGD (70 aa). Phosphoserine occurs at positions 202, 205, 218, 222, and 275. In terms of domain architecture, C2 1 spans 358–480; sequence VTGKIAFSLK…KLDKKLDHCL (123 aa). At Ser-490 the chain carries Phosphoserine. The C2 2 domain maps to 509–635; it reads PASKLPVGGD…ISNGEVVDWM (127 aa).

As to quaternary structure, part of a ternary complex containing STX1A and RAB27A. Can bind both dominant negative and dominant active mutants of RAB27A. Binds STXBP1, RAB3A, RAB8A and RAB27B. Interacts with MYO5A. In terms of tissue distribution, detected in the pancreatic islet, in particular in insulin-positive beta cells, and in pituitary.

The protein localises to the membrane. The protein resides in the cytoplasmic vesicle. It localises to the secretory vesicle membrane. Modulates exocytosis of dense-core granules and secretion of hormones in the pancreas and the pituitary. Interacts with vesicles containing negatively charged phospholipids in a Ca(2+)-independent manner. The sequence is that of Synaptotagmin-like protein 4 (Sytl4) from Mus musculus (Mouse).